Here is a 342-residue protein sequence, read N- to C-terminus: Putative aryl-alcohol dehydrogenase AAD16 (342 aa).

The protein belongs to the aldo/keto reductase family. Aldo/keto reductase 2 subfamily.

Its function is as follows. Putative aryl-alcohol dehydrogenase. In Saccharomyces cerevisiae (strain ATCC 204508 / S288c) (Baker's yeast), this protein is Putative aryl-alcohol dehydrogenase AAD16.